The following is a 229-amino-acid chain: Molybdenum transport system permease protein ModB (229 aa).

An ABC transmembrane type-1 domain is found at 6–214; sequence INLSLSVAVS…LISLLLSEWL (209 aa). 5 consecutive transmembrane segments (helical) span residues 12 to 32, 45 to 65, 83 to 103, 132 to 152, and 196 to 216; these read VAVS…WLLA, VIHL…LVAM, FGFS…PLVV, FFTI…VLGF, and LCLF…WLSK.

Belongs to the binding-protein-dependent transport system permease family. CysTW subfamily.

The protein localises to the cell inner membrane. Part of the binding-protein-dependent transport system for molybdenum; probably responsible for the translocation of the substrate across the membrane. This chain is Molybdenum transport system permease protein ModB (modB), found in Haemophilus influenzae (strain ATCC 51907 / DSM 11121 / KW20 / Rd).